A 423-amino-acid chain; its full sequence is CinA-like protein (423 aa).

It belongs to the CinA family.

The sequence is that of CinA-like protein from Chlorobium chlorochromatii (strain CaD3).